The primary structure comprises 186 residues: Ribosome-recycling factor (186 aa).

It belongs to the RRF family.

The protein resides in the cytoplasm. In terms of biological role, responsible for the release of ribosomes from messenger RNA at the termination of protein biosynthesis. May increase the efficiency of translation by recycling ribosomes from one round of translation to another. The chain is Ribosome-recycling factor from Rickettsia prowazekii (strain Madrid E).